The following is a 921-amino-acid chain: Isoleucine--tRNA ligase (921 aa).

A 'HIGH' region motif is present at residues 57 to 67 (PYANGELHMGH). Position 552 (Glu552) interacts with L-isoleucyl-5'-AMP. The 'KMSKS' region motif lies at 593–597 (KMSKS). Residue Lys596 participates in ATP binding. The Zn(2+) site is built by Cys888, Cys891, Cys908, and Cys911.

This sequence belongs to the class-I aminoacyl-tRNA synthetase family. IleS type 1 subfamily. As to quaternary structure, monomer. Requires Zn(2+) as cofactor.

It localises to the cytoplasm. It catalyses the reaction tRNA(Ile) + L-isoleucine + ATP = L-isoleucyl-tRNA(Ile) + AMP + diphosphate. Functionally, catalyzes the attachment of isoleucine to tRNA(Ile). As IleRS can inadvertently accommodate and process structurally similar amino acids such as valine, to avoid such errors it has two additional distinct tRNA(Ile)-dependent editing activities. One activity is designated as 'pretransfer' editing and involves the hydrolysis of activated Val-AMP. The other activity is designated 'posttransfer' editing and involves deacylation of mischarged Val-tRNA(Ile). In Listeria monocytogenes serovar 1/2a (strain ATCC BAA-679 / EGD-e), this protein is Isoleucine--tRNA ligase.